Consider the following 210-residue polypeptide: MTVWVGLTGGIGSGKSAAAQCFADLGVPRIDADAAAHSLTASDGIALPEIRRLFGDTVFDTQGLLRRDILRKEVFASPSRKALLESVMLPLIFSEIKKQQETFTDAAYGIVEIPLLTEKRQFISLIRRVLTISAPLEKRIGRVMARSGLTRGEVAAVISHQASESERLLLADDVLLNDGSLKSLREKTMRLHAFYSGIFASKPTQGKHNG.

In terms of domain architecture, DPCK spans 4 to 202 (WVGLTGGIGS…AFYSGIFASK (199 aa)). Residue 12 to 17 (GSGKSA) participates in ATP binding.

Belongs to the CoaE family.

It is found in the cytoplasm. The catalysed reaction is 3'-dephospho-CoA + ATP = ADP + CoA + H(+). It participates in cofactor biosynthesis; coenzyme A biosynthesis; CoA from (R)-pantothenate: step 5/5. Catalyzes the phosphorylation of the 3'-hydroxyl group of dephosphocoenzyme A to form coenzyme A. This is Dephospho-CoA kinase from Neisseria meningitidis serogroup A / serotype 4A (strain DSM 15465 / Z2491).